We begin with the raw amino-acid sequence, 148 residues long: MKIKIHNKTNISIKYLTKILKKIFFFVPERQNIHIIFITPLKMKKMNFYYRQKDYDTDVLSFINEIDKDSLGDIFINLKKAQKQSQNYNHSLSREVCFLATHGYLHLKGYEHHSKDELKKMLIIQEKMLKKVDLDKKIISKNKKNNND.

Zn(2+) is bound by residues His-102, His-106, and His-112.

Belongs to the endoribonuclease YbeY family. Zn(2+) serves as cofactor.

The protein resides in the cytoplasm. Single strand-specific metallo-endoribonuclease involved in late-stage 70S ribosome quality control and in maturation of the 3' terminus of the 16S rRNA. In Phytoplasma mali (strain AT), this protein is Endoribonuclease YbeY.